We begin with the raw amino-acid sequence, 1705 residues long: Rho guanine nucleotide exchange factor 28 (1705 aa).

Disordered regions lie at residues 287–316 (RPEERTAMPSSGAETEEEIKNSVSSRSAAE) and 473–524 (KKRS…ETNT). Phosphoserine is present on residues S313 and S478. The segment covering 501 to 510 (PGSQSSSRTG) has biased composition (polar residues). A Phosphoserine modification is found at S624. The disordered stretch occupies residues 630 to 649 (MTSPRNKSKTKSKDAKDKEK). Residues 640–649 (KSKDAKDKEK) are compositionally biased toward basic and acidic residues. The Phorbol-ester/DAG-type zinc finger occupies 652 to 699 (RHQFAPGTFSGVLQCLVCDKTLLGKESLQCSNCNANVHKGCKDAAPAC). Composition is skewed to polar residues over residues 710-721 (NKPQTILGNSSF) and 759-775 (VPGTTLESFRRSATSLE). Residues 710-800 (NKPQTILGNS…ELLQSMGSSP (91 aa)) are disordered. Positions 777–791 (ESDHNSCRSRSHSDE) are enriched in basic and acidic residues. The 196-residue stretch at 849–1044 (KRQDVIFELM…KDMIATVDLK (196 aa)) folds into the DH domain. Residues 1086–1188 (TLLYDGLVYW…WMRRIQQAVE (103 aa)) form the PH domain. The tract at residues 1187 to 1207 (VESCPEEKGGRTSESDEDKRK) is disordered. A compositionally biased stretch (basic and acidic residues) spans 1191–1207 (PEEKGGRTSESDEDKRK). An interaction with PTK2/FAK1; required for regulation of axonal branching and synapse formation region spans residues 1295–1304 (AVSQSCEDSC). The disordered stretch occupies residues 1312–1339 (TLSSHDVPGSPTASLVTGGREGRGCSDV). The segment at 1372 to 1383 (IIQAIQNLTRLL) is mediates cytoplasmic retention and interaction with YWHAH. Residues 1425 to 1705 (QKSRDADRQH…DGAKENIVYL (281 aa)) are interaction with microtubules. Positions 1488-1525 (RSRGELDLQLQEYQHSLERLREGQRLVEREQARMRAQQ) form a coiled coil. The RNA-binding stretch occupies residues 1496 to 1527 (QLQEYQHSLERLREGQRLVEREQARMRAQQSL). A Phosphoserine modification is found at S1538. Positions 1566 to 1579 (FINEALVQMSFNTF) are mediates cytoplasmic retention and interaction with MAPK8IP1. The tract at residues 1638 to 1705 (PFHESSKDSC…DGAKENIVYL (68 aa)) is disordered. Residues 1641–1655 (ESSKDSCKNDLDTSH) show a composition bias toward basic and acidic residues. Residues 1656–1669 (TESPTPHDSNSHRP) are compositionally biased toward polar residues. The span at 1688–1699 (TRQDGETGDGAK) shows a compositional bias: basic and acidic residues.

As to quaternary structure, homooligomer; forms cytoplasmic aggregates. Forms a complex with MAPK8 and MAPK8IP1. Interacts with RHOA. Interacts with microtubules. Interacts with YWHAE and YWHAH. Interacts with PTK2/FAK1. Interacts with NEFL. Interacts with CTNND2; prevents interaction with RHOA. Post-translationally, phosphorylated on tyrosine upon stimulation of cells by laminin.

It localises to the cytoplasm. It is found in the cell membrane. Functions as a RHOA-specific guanine nucleotide exchange factor regulating signaling pathways downstream of integrins and growth factor receptors. Functions in axonal branching, synapse formation and dendritic morphogenesis. Also functions in focal adhesion formation, cell motility and B-lymphocytes activation. May regulate NEFL expression and aggregation and play a role in apoptosis. This is Rho guanine nucleotide exchange factor 28 (ARHGEF28) from Homo sapiens (Human).